We begin with the raw amino-acid sequence, 510 residues long: Probable cytochrome P450 4d20 (510 aa).

Residue C455 coordinates heme.

It belongs to the cytochrome P450 family. Requires heme as cofactor.

The protein localises to the endoplasmic reticulum membrane. Its subcellular location is the microsome membrane. In terms of biological role, may be involved in the metabolism of insect hormones and in the breakdown of synthetic insecticides. This is Probable cytochrome P450 4d20 (Cyp4d20) from Drosophila melanogaster (Fruit fly).